The following is a 217-amino-acid chain: Secreted RxLR effector protein 147 (217 aa).

An N-terminal signal peptide occupies residues 1–23; that stretch reads MRGAFYVTTALLITNSIRTAAEA. The tract at residues 22–52 is disordered; sequence EANPPGRQPMSHHDGVVPGKSSPRRFLQGSH. The short motif at 46 to 67 is the RxLR-dEER element; the sequence is RFLQGSHEPHDKFAVSAANEER.

The protein belongs to the RxLR effector family.

Its subcellular location is the secreted. The protein resides in the host nucleus. It localises to the host cytoplasm. Its function is as follows. Secreted effector that completely suppresses the host cell death induced by cell death-inducing proteins. This chain is Secreted RxLR effector protein 147, found in Plasmopara viticola (Downy mildew of grapevine).